Consider the following 115-residue polypeptide: Insulin-like peptide IlO1_i1 (115 aa).

The first 20 residues, 1-20, serve as a signal peptide directing secretion; sequence MFVYTTIMLLLLAEINHSQG. 3 disulfides stabilise this stretch: cysteine 40-cysteine 101, cysteine 52-cysteine 114, and cysteine 100-cysteine 105. The propeptide at 59–93 is c peptide; that stretch reads RRNRITGLDQRSIFESNLLAKRFLISRRQIVNNRR.

The protein belongs to the insulin family. Expressed in tentacles.

The protein resides in the secreted. Functionally, heterodimer with unknown function. Surprisingly, the truncated synthetic analog (dimer of 27-58 and 94-115) does not bind to long insulin receptor (HIR-B) and insulin-like growth factor 1 receptor. This truncated synthetic analog shows very weak inhibitory activity on different voltage-gated channels. The sequence is that of Insulin-like peptide IlO1_i1 from Oulactis sp. (Sea anemone).